A 1099-amino-acid polypeptide reads, in one-letter code: Glutamine--fructose-6-phosphate aminotransferase [isomerizing] (1099 aa).

Residue Cys-2 is the Nucleophile; for GATase activity of the active site. In terms of domain architecture, Glutamine amidotransferase type-2; first part spans 2–71 (CGIIGYIGND…DIDGNIGIGH (70 aa)). The region spanning 198–253 (LRKVREKLGLTRKDVEKLCGVKEIYIVKIETGKLESIEEERLKKLCSLYGINFEEI) is the HTH cro/C1-type domain. Residues 278 to 413 (IIGYIIGDGH…IQFLLLRFGI (136 aa)) enclose the DOD-type homing endonuclease domain. A Glutamine amidotransferase type-2; second part domain is found at 571 to 723 (SRWATHGNVC…DGDVVVIKKK (153 aa)). 2 consecutive SIS domains span residues 786–923 (LAKC…LLGR) and 948–1089 (TIKE…VDKP). Residue Lys-1094 is the For Fru-6P isomerization activity of the active site.

The protein in the C-terminal section; belongs to the SIS family. GFAT subfamily. In terms of assembly, homodimer. In terms of processing, this protein undergoes a protein self splicing that involves a post-translational excision of the intervening region (intein) followed by peptide ligation.

The protein localises to the cytoplasm. It catalyses the reaction D-fructose 6-phosphate + L-glutamine = D-glucosamine 6-phosphate + L-glutamate. Catalyzes the first step in hexosamine metabolism, converting fructose-6P into glucosamine-6P using glutamine as a nitrogen source. This chain is Glutamine--fructose-6-phosphate aminotransferase [isomerizing] (glmS), found in Methanocaldococcus jannaschii (strain ATCC 43067 / DSM 2661 / JAL-1 / JCM 10045 / NBRC 100440) (Methanococcus jannaschii).